A 231-amino-acid polypeptide reads, in one-letter code: S-norcoclaurine synthase 2 (231 aa).

Position 107–109 (107–109) interacts with dopamine; that stretch reads YKE. The active-site Proton donor is K121. D140 is a (4-hydroxyphenyl)acetaldehyde binding site. A helical transmembrane segment spans residues 210 to 230; it reads LLLCLIICLVIAGGMFVAGVP.

This sequence belongs to the BetVI family. Expressed in roots, stems and leaves. Detected in flower buds and germinating seeds. Low expression in carpels. Restricted to sieve elements of the phloem adjacent or proximal to laticifers.

It is found in the endoplasmic reticulum membrane. The protein resides in the vacuole membrane. The enzyme catalyses (4-hydroxyphenyl)acetaldehyde + dopamine = (S)-norcoclaurine + H2O. Its pathway is alkaloid biosynthesis; (S)-reticuline biosynthesis. Activity doubles within 5 hours of elicitor treatment and continues to increase for at least 80 hours. In terms of biological role, involved in the biosynthesis of (S)-coclaurine, the common precursor of all benzylisoquinoline alkaloids such as morphine, sanguinarine, codeine or papaverine. Condenses dopamine and 4-hydroxyphenylacetaldehyde. The polypeptide is S-norcoclaurine synthase 2 (Papaver somniferum (Opium poppy)).